Here is a 205-residue protein sequence, read N- to C-terminus: Ribosomal RNA small subunit methyltransferase G (205 aa).

S-adenosyl-L-methionine-binding positions include Gly-73, Leu-78, 124 to 125 (VE), and Arg-138.

This sequence belongs to the methyltransferase superfamily. RNA methyltransferase RsmG family.

Its subcellular location is the cytoplasm. The enzyme catalyses guanosine(527) in 16S rRNA + S-adenosyl-L-methionine = N(7)-methylguanosine(527) in 16S rRNA + S-adenosyl-L-homocysteine. In terms of biological role, specifically methylates the N7 position of guanine in position 527 of 16S rRNA. This chain is Ribosomal RNA small subunit methyltransferase G, found in Actinobacillus pleuropneumoniae serotype 5b (strain L20).